We begin with the raw amino-acid sequence, 632 residues long: Extracellular metalloproteinase 2 (632 aa).

A signal peptide spans 1–19; it reads MHGLLLAGLAAALPLGVAG. The propeptide occupies 20-244; the sequence is LPARQQSGLS…VHNVVDYVAS (225 aa). A glycan (N-linked (GlcNAc...) asparagine) is linked at Asn270. His429 is a Zn(2+) binding site. Glu430 is a catalytic residue. His433 is a binding site for Zn(2+).

It belongs to the peptidase M36 family. The cofactor is Zn(2+).

The protein resides in the secreted. In terms of biological role, secreted metalloproteinase that allows assimilation of proteinaceous substrates and probably acts as a virulence factor. This chain is Extracellular metalloproteinase 2 (MEP2), found in Arthroderma gypseum (strain ATCC MYA-4604 / CBS 118893) (Microsporum gypseum).